The sequence spans 300 residues: TLR adapter interacting with SLC15A4 on the lysosome (300 aa).

The pLxIS motif motif lies at 289–293 (SLHIS). S293 bears the Phosphoserine mark.

Interacts (via pLxIS motif) with IRF5; leading to IRF5 activation. Interacts with SLC15A4; leading to its recruitment to endolysosome. In terms of processing, the phosphorylated pLxIS motif constitutes an IRF5-binding motif, leading to recruitment of the transcription factor IRF5 to induce type-I interferons and other cytokines.

It localises to the lysosome membrane. It is found in the endosome membrane. The protein resides in the nucleus. Its subcellular location is the cytoplasm. In terms of biological role, innate immune adapter that mediates the recruitment and activation of IRF5 downstream of endolysosomal toll-like receptors TLR7, TLR8 and TLR9. Following recruitment to endolysosome by SLC15A4 downstream of TLR7, TLR8 and TLR9, specifically recruits IRF5 transcription factor via its pLxIS motif, leading to IRF5 activation and subsequent expression of type I interferons. Plays a role in the regulation of endolysosomal pH in immune cells such as B-cells, dendritic cells and monocytes. This Bos taurus (Bovine) protein is TLR adapter interacting with SLC15A4 on the lysosome.